The following is a 172-amino-acid chain: Adenine phosphoribosyltransferase (172 aa).

The protein belongs to the purine/pyrimidine phosphoribosyltransferase family. Homodimer.

Its subcellular location is the cytoplasm. The enzyme catalyses AMP + diphosphate = 5-phospho-alpha-D-ribose 1-diphosphate + adenine. It participates in purine metabolism; AMP biosynthesis via salvage pathway; AMP from adenine: step 1/1. Catalyzes a salvage reaction resulting in the formation of AMP, that is energically less costly than de novo synthesis. The protein is Adenine phosphoribosyltransferase of Picosynechococcus sp. (strain ATCC 27264 / PCC 7002 / PR-6) (Agmenellum quadruplicatum).